The primary structure comprises 345 residues: MDQTSLILAIESSCDETSVAVIKNGDIILSNIIATQINSHQRFGGVVPEVASRHHIEQITICIEQALKQAEVRKEDLDAVAVTYGPGLVGALLVGVSAAKAFAFANELPLIPVNHMIGHIYAARFVKPIVFPALALLVSGGHTELVYMPTENEFKIIGETRDDAAGEAYDKVGRVMGLKYPAGKAIDELAHQGEDIFKFPRAMEHEDNFDFSFSGLKSAFINTVHHADQINEELSKKDLAASFQQSVIDVITAKTVRACEQLEIKQLILAGGVAANRGLRDTLDKELGEKFNHLDFVKAPLDLCGDNGAMIGAAGEMLMRHQVFADMTLNADPSLEFDWEPEAIK.

The Fe cation site is built by His115 and His119. Substrate is bound by residues 137-141 (LVSGG), Asp170, Gly183, Asp187, and Asn276. Asp306 serves as a coordination point for Fe cation.

Belongs to the KAE1 / TsaD family. Requires Fe(2+) as cofactor.

Its subcellular location is the cytoplasm. The catalysed reaction is L-threonylcarbamoyladenylate + adenosine(37) in tRNA = N(6)-L-threonylcarbamoyladenosine(37) in tRNA + AMP + H(+). In terms of biological role, required for the formation of a threonylcarbamoyl group on adenosine at position 37 (t(6)A37) in tRNAs that read codons beginning with adenine. Is involved in the transfer of the threonylcarbamoyl moiety of threonylcarbamoyl-AMP (TC-AMP) to the N6 group of A37, together with TsaE and TsaB. TsaD likely plays a direct catalytic role in this reaction. In Pediococcus pentosaceus (strain ATCC 25745 / CCUG 21536 / LMG 10740 / 183-1w), this protein is tRNA N6-adenosine threonylcarbamoyltransferase.